We begin with the raw amino-acid sequence, 382 residues long: Na(+)/H(+) antiporter NhaA 2 (382 aa).

Helical transmembrane passes span 7 to 27, 28 to 48, 52 to 72, 88 to 108, 118 to 138, 147 to 167, 170 to 190, 206 to 226, 254 to 274, 285 to 305, 325 to 345, and 356 to 376; these read AGGV…NSYL, SGFY…AFEI, LLLW…GLEV, VLPG…YASF, GWAI…SLFG, LFLL…IALF, HELS…LFVL, LVVW…GFVI, VAYF…LGGI, LGII…VCWL, GVCL…SLAF, and VKLG…LILT.

Belongs to the NhaA Na(+)/H(+) (TC 2.A.33) antiporter family.

It is found in the cell inner membrane. The catalysed reaction is Na(+)(in) + 2 H(+)(out) = Na(+)(out) + 2 H(+)(in). In terms of biological role, na(+)/H(+) antiporter that extrudes sodium in exchange for external protons. The polypeptide is Na(+)/H(+) antiporter NhaA 2 (Saccharophagus degradans (strain 2-40 / ATCC 43961 / DSM 17024)).